The chain runs to 211 residues: Beta-crystallin B3 (211 aa).

Met1 carries the N-acetylmethionine modification. The residue at position 2 (Ala2) is an N-acetylalanine; in Beta-crystallin B3, N-terminally processed. The tract at residues 2–23 (AEQHSTPEQAAAGKSHGGLGGS) is N-terminal arm. 2 consecutive Beta/gamma crystallin 'Greek key' domains span residues 24–63 (YKVI…QVES) and 64–108 (GPWL…RPLH). The connecting peptide stretch occupies residues 109-113 (IDGPD). Beta/gamma crystallin 'Greek key' domains lie at 114–155 (HKLH…RAIN) and 156–198 (GTWV…RRIR). The segment at 200–211 (QKWHKRGVFLSS) is C-terminal arm.

It belongs to the beta/gamma-crystallin family. Homo/heterodimer, or complexes of higher-order. The structure of beta-crystallin oligomers seems to be stabilized through interactions between the N-terminal arms.

In terms of biological role, crystallins are the dominant structural components of the vertebrate eye lens. This Bos taurus (Bovine) protein is Beta-crystallin B3 (CRYBB3).